The chain runs to 227 residues: Cysteine-rich hydrophobic domain-containing protein 1 (227 aa).

Residues 1 to 84 (MSILLPNMAE…PPRVVSEEHL (84 aa)) form a disordered region. Residues 13–23 (TISELEEEEEA) are compositionally biased toward acidic residues. Residues 24-44 (ATSSSSPSSSPSSSSSSSVSG) show a composition bias toward low complexity. Positions 45 to 72 (PDEDEEDEEEEEEEDEEEEDEEEEEEEV) are enriched in acidic residues. A coiled-coil region spans residues 46 to 73 (DEDEEDEEEEEEEDEEEEDEEEEEEEVP).

Belongs to the CHIC family. Palmitoylated. As to expression, expressed moderately in the brain.

The protein resides in the cell membrane. It localises to the cytoplasmic vesicle. The protein is Cysteine-rich hydrophobic domain-containing protein 1 (Chic1) of Mus musculus (Mouse).